A 117-amino-acid polypeptide reads, in one-letter code: Ribonuclease P protein component (117 aa).

It belongs to the RnpA family. In terms of assembly, consists of a catalytic RNA component (M1 or rnpB) and a protein subunit.

It catalyses the reaction Endonucleolytic cleavage of RNA, removing 5'-extranucleotides from tRNA precursor.. In terms of biological role, RNaseP catalyzes the removal of the 5'-leader sequence from pre-tRNA to produce the mature 5'-terminus. It can also cleave other RNA substrates such as 4.5S RNA. The protein component plays an auxiliary but essential role in vivo by binding to the 5'-leader sequence and broadening the substrate specificity of the ribozyme. This Lactococcus lactis subsp. lactis (strain IL1403) (Streptococcus lactis) protein is Ribonuclease P protein component.